Reading from the N-terminus, the 679-residue chain is Single-strand DNA endonuclease ASTE1 (679 aa).

Residues Thr-351 to Leu-400 are interaction with SHLD2. The disordered stretch occupies residues Arg-625–Gly-645. A compositionally biased stretch (basic residues) spans Ser-626–Lys-635.

It belongs to the asteroid family. In terms of assembly, interacts with SHLD1, SHLD2, SHLD3, RIF1 and MAD2L2/REV7.

Functionally, structure-specific DNA endonuclease that specifically cleaves single-stranded DNA and 3' overhang DNA. Contributes to the control of DNA double-strand break repair choice by antagonizing BRCA1-dependent homologous recombination (HR) and promoting non-homologous end-joining (NHEJ). Recruited to the single-stranded DNA ends by SHLD2 and cleaves the 3' exposed DNA ends, therefore inhibiting DNA end resection (necessary for HR) and promoting DNA end protection (necessary for NHEJ). This Homo sapiens (Human) protein is Single-strand DNA endonuclease ASTE1 (ASTE1).